We begin with the raw amino-acid sequence, 81 residues long: Large ribosomal subunit protein bL31B (81 aa).

The protein belongs to the bacterial ribosomal protein bL31 family. Type B subfamily. In terms of assembly, part of the 50S ribosomal subunit.

The polypeptide is Large ribosomal subunit protein bL31B (Borrelia garinii subsp. bavariensis (strain ATCC BAA-2496 / DSM 23469 / PBi) (Borreliella bavariensis)).